Here is a 671-residue protein sequence, read N- to C-terminus: Pescadillo homolog (671 aa).

The 87-residue stretch at 317 to 403 (KVRELFRGLT…LMLPVTGYRI (87 aa)) folds into the BRCT domain. Residues 548–584 (QALRKAQEKSRQTETSEARLQRKMSEVKRQEAATRKM) are a coiled coil. 2 disordered regions span residues 552–578 (KAQE…KRQE) and 643–671 (RRQR…KWVQ).

Belongs to the pescadillo family.

It is found in the nucleus. The protein resides in the nucleolus. It localises to the nucleoplasm. In terms of biological role, required for maturation of ribosomal RNAs and formation of the large ribosomal subunit. This Leishmania infantum protein is Pescadillo homolog.